A 299-amino-acid polypeptide reads, in one-letter code: Protease HtpX homolog (299 aa).

The next 2 membrane-spanning stretches (helical) occupy residues 14–34 and 39–59; these read IVLL…VGYL and LVGG…SMIF. Histidine 143 contributes to the Zn(2+) binding site. Glutamate 144 is an active-site residue. A Zn(2+)-binding site is contributed by histidine 147. The next 2 helical transmembrane spans lie at 158 to 178 and 198 to 218; these read IAVA…RMMW and IILL…ASLV. Glutamate 227 is a binding site for Zn(2+).

This sequence belongs to the peptidase M48B family. It depends on Zn(2+) as a cofactor.

It localises to the cell membrane. This Streptococcus mutans serotype c (strain ATCC 700610 / UA159) protein is Protease HtpX homolog.